A 286-amino-acid polypeptide reads, in one-letter code: Merozoite surface protein 2 (286 aa).

An N-terminal signal peptide occupies residues 1-20 (MKVIKTLSIINFFIFVTFNI). Asn-22 and Asn-36 each carry an N-linked (GlcNAc...) asparagine glycan. The interval 43–248 (MTESKTPTPT…SQKECTDGNK (206 aa)) is disordered. Positions 44–212 (TESKTPTPTG…EQTESPELQS (169 aa)) are polymorphic region. Residues 54-68 (AGAGASGSAGSGDGA) show a composition bias toward gly residues. The stretch at 59 to 68 (SGSAGSGDGA) is repeat 1. Residues 59–106 (SGSAGSGDGASGSASGSASGSASGSAGASGSASGSAGASGSASGSAGA) form a 5 X 10 AA tandem repeats of S-G-S-A-[GS]-[GS]-[AD]-G-A region. One copy of the 2; partial repeat lies at 69–76 (SGSASGSA). Low complexity predominate over residues 69–137 (SGSASGSASG…STSTSSENPN (69 aa)). Repeat copies occupy residues 77 to 86 (SGSASGSAGA), 88 to 96 (GSASGSAGA), and 97 to 106 (SGSASGSAGA). 2 stretches are compositionally biased toward polar residues: residues 153–179 (KPNQ…NVPP) and 186–214 (KSPT…QSAP). N-linked (GlcNAc...) asparagine glycosylation is present at Asn-163. N-linked (GlcNAc...) asparagine glycosylation is present at Asn-235. Basic and acidic residues predominate over residues 239-248 (SQKECTDGNK). A disulfide bond links Cys-243 and Cys-251. 2 N-linked (GlcNAc...) asparagine glycosylation sites follow: Asn-259 and Asn-260. Asn-260 carries GPI-anchor amidated asparagine lipidation. The propeptide at 261–286 (SSNIASINKFVVLISATLVLSFAIFI) is removed in mature form.

Its subcellular location is the cell membrane. May play a role in the merozoite attachment to the erythrocyte. This chain is Merozoite surface protein 2, found in Plasmodium falciparum (isolate 311).